A 513-amino-acid polypeptide reads, in one-letter code: ATP synthase subunit alpha (513 aa).

169 to 176 is a binding site for ATP; it reads GDRQTGKT.

It belongs to the ATPase alpha/beta chains family. As to quaternary structure, F-type ATPases have 2 components, CF(1) - the catalytic core - and CF(0) - the membrane proton channel. CF(1) has five subunits: alpha(3), beta(3), gamma(1), delta(1), epsilon(1). CF(0) has three main subunits: a(1), b(2) and c(9-12). The alpha and beta chains form an alternating ring which encloses part of the gamma chain. CF(1) is attached to CF(0) by a central stalk formed by the gamma and epsilon chains, while a peripheral stalk is formed by the delta and b chains.

The protein resides in the cell inner membrane. The catalysed reaction is ATP + H2O + 4 H(+)(in) = ADP + phosphate + 5 H(+)(out). Functionally, produces ATP from ADP in the presence of a proton gradient across the membrane. The alpha chain is a regulatory subunit. In Shewanella putrefaciens (strain CN-32 / ATCC BAA-453), this protein is ATP synthase subunit alpha.